The chain runs to 570 residues: Glutamate--tRNA ligase, chloroplastic/mitochondrial (570 aa).

The N-terminal 39 residues, M1–F39, are a transit peptide targeting the chloroplast and mitochondrion. R57 to A59 is an L-glutamate binding site. The 'HIGH' region motif lies at P60–G70. H67 contacts ATP. L-glutamate-binding positions include E93, Y245–V249, and R263. ATP contacts are provided by residues E266 and K301–R305. The 'KMSKS' region motif lies at K301 to R305.

This sequence belongs to the class-I aminoacyl-tRNA synthetase family. Glutamate--tRNA ligase type 1 subfamily.

The protein localises to the plastid. The protein resides in the chloroplast. It localises to the mitochondrion. It catalyses the reaction tRNA(Glu) + L-glutamate + ATP = L-glutamyl-tRNA(Glu) + AMP + diphosphate. In terms of biological role, catalyzes the attachment of glutamate to tRNA(Glu) in a two-step reaction: glutamate is first activated by ATP to form Glu-AMP and then transferred to the acceptor end of tRNA(Glu). The polypeptide is Glutamate--tRNA ligase, chloroplastic/mitochondrial (Arabidopsis thaliana (Mouse-ear cress)).